The primary structure comprises 203 residues: uncharacterized protein (203 aa).

The segment at 174–203 is disordered; it reads LASSKNPRARSPGLDPLGSSETLWSHRGGH.

This is an uncharacterized protein from Homo sapiens (Human).